Reading from the N-terminus, the 971-residue chain is GEM-interacting protein (971 aa).

At Ser-19 the chain carries Phosphoserine. Disordered regions lie at residues Ala-41 to Pro-79, Leu-231 to Lys-267, and Asp-383 to Gly-476. Over residues Pro-44–Asp-56 the composition is skewed to basic and acidic residues. Over residues Thr-59–Ser-69 the composition is skewed to polar residues. A phosphoserine mark is found at Ser-75, Ser-235, Ser-238, Ser-247, Ser-436, and Ser-440. One can recognise an F-BAR domain in the interval Glu-85–Arg-348. The segment covering Ser-458–Asp-471 has biased composition (acidic residues). A Phorbol-ester/DAG-type zinc finger spans residues Thr-492 to Cys-536. In terms of domain architecture, Rho-GAP spans Leu-553–Phe-756. Thr-659 bears the Phosphothreonine mark. The tract at residues Ile-799–Ser-865 is disordered. Over residues Pro-805 to Pro-817 the composition is skewed to basic and acidic residues. Phosphoserine is present on residues Ser-884, Ser-908, and Ser-924.

As to quaternary structure, interacts with GEM through its N-terminal.

Functionally, stimulates, in vitro and in vivo, the GTPase activity of RhoA. This is GEM-interacting protein (Gmip) from Mus musculus (Mouse).